A 145-amino-acid polypeptide reads, in one-letter code: UPF0735 ACT domain-containing protein CLD_1535 (145 aa).

In terms of domain architecture, ACT spans Thr69–Met144.

This sequence belongs to the UPF0735 family.

This is UPF0735 ACT domain-containing protein CLD_1535 from Clostridium botulinum (strain Okra / Type B1).